We begin with the raw amino-acid sequence, 501 residues long: Betaine aldehyde dehydrogenase, chloroplastic (501 aa).

The N-terminal 7 residues, 1 to 7, are a transit peptide targeting the chloroplast; sequence MAIRVPS. 238–243 is an NAD(+) binding site; sequence GSTATG. Glutamate 260 acts as the Proton acceptor in catalysis. The active-site Nucleophile is the cysteine 294.

This sequence belongs to the aldehyde dehydrogenase family. Homodimer.

It is found in the plastid. Its subcellular location is the chloroplast. The catalysed reaction is betaine aldehyde + NAD(+) + H2O = glycine betaine + NADH + 2 H(+). It functions in the pathway amine and polyamine biosynthesis; betaine biosynthesis via choline pathway; betaine from betaine aldehyde: step 1/1. The chain is Betaine aldehyde dehydrogenase, chloroplastic (BADH4) from Amaranthus hypochondriacus (Prince-of-Wales feather).